Here is a 197-residue protein sequence, read N- to C-terminus: Probable GTP-binding protein EngB (197 aa).

The 174-residue stretch at 22 to 195 folds into the EngB-type G domain; the sequence is QLPELALAGR…WRTILNHLKV (174 aa). GTP contacts are provided by residues 30–37, 57–61, 75–78, 142–145, and 174–176; these read GRSNVGKS, GKTQT, DVPG, TKAD, and FSS. Residues Ser-37 and Thr-59 each contribute to the Mg(2+) site.

The protein belongs to the TRAFAC class TrmE-Era-EngA-EngB-Septin-like GTPase superfamily. EngB GTPase family. Mg(2+) is required as a cofactor.

Functionally, necessary for normal cell division and for the maintenance of normal septation. This is Probable GTP-binding protein EngB from Shouchella clausii (strain KSM-K16) (Alkalihalobacillus clausii).